Reading from the N-terminus, the 118-residue chain is Small ribosomal subunit protein uS13 (118 aa).

The segment at 94–118 (GLPVRGQRTKTNARTRKGPRKPIRK) is disordered.

The protein belongs to the universal ribosomal protein uS13 family. In terms of assembly, part of the 30S ribosomal subunit. Forms a loose heterodimer with protein S19. Forms two bridges to the 50S subunit in the 70S ribosome.

In terms of biological role, located at the top of the head of the 30S subunit, it contacts several helices of the 16S rRNA. In the 70S ribosome it contacts the 23S rRNA (bridge B1a) and protein L5 of the 50S subunit (bridge B1b), connecting the 2 subunits; these bridges are implicated in subunit movement. Contacts the tRNAs in the A and P-sites. The sequence is that of Small ribosomal subunit protein uS13 from Pseudomonas aeruginosa (strain LESB58).